Here is a 230-residue protein sequence, read N- to C-terminus: Potassium/proton antiporter CemA (230 aa).

Helical transmembrane passes span 7 to 27, 106 to 126, 145 to 165, and 181 to 201; these read LPSFLYLVFIVLLPWGVSFSF, IILHFSTNIICLAILSGSFFL, LNDSVKAFFILLVTDFFVGFH, and LGWVPNELIFTIFVCSFPVIL.

The protein belongs to the CemA family.

The protein resides in the plastid. It is found in the chloroplast inner membrane. The enzyme catalyses K(+)(in) + H(+)(out) = K(+)(out) + H(+)(in). Its function is as follows. Contributes to K(+)/H(+) antiport activity by supporting proton efflux to control proton extrusion and homeostasis in chloroplasts in a light-dependent manner to modulate photosynthesis. Prevents excessive induction of non-photochemical quenching (NPQ) under continuous-light conditions. Indirectly promotes efficient inorganic carbon uptake into chloroplasts. The sequence is that of Potassium/proton antiporter CemA from Oryza nivara (Indian wild rice).